A 422-amino-acid polypeptide reads, in one-letter code: L-threonine dehydratase biosynthetic IlvA (422 aa).

Lys56 carries the N6-(pyridoxal phosphate)lysine modification. Pyridoxal 5'-phosphate contacts are provided by residues Asn83, 189 to 193 (GGGGL), and Ser315. Positions 339–413 (HYFILNFPQR…FDPSNIYINE (75 aa)) constitute an ACT-like domain.

It belongs to the serine/threonine dehydratase family. As to quaternary structure, homotetramer. Pyridoxal 5'-phosphate is required as a cofactor.

The catalysed reaction is L-threonine = 2-oxobutanoate + NH4(+). It participates in amino-acid biosynthesis; L-isoleucine biosynthesis; 2-oxobutanoate from L-threonine: step 1/1. Its function is as follows. Catalyzes the anaerobic formation of alpha-ketobutyrate and ammonia from threonine in a two-step reaction. The first step involved a dehydration of threonine and a production of enamine intermediates (aminocrotonate), which tautomerizes to its imine form (iminobutyrate). Both intermediates are unstable and short-lived. The second step is the nonenzymatic hydrolysis of the enamine/imine intermediates to form 2-ketobutyrate and free ammonia. In the low water environment of the cell, the second step is accelerated by RidA. This Staphylococcus epidermidis (strain ATCC 12228 / FDA PCI 1200) protein is L-threonine dehydratase biosynthetic IlvA (ilvA).